The following is an 84-amino-acid chain: MSILSFLLGEKKKSASVAKERLQLIIAHERAGGHAPADYLPALQRELVAVISKYVKISHEDIRVSLERQDDLEVLEVKIEIPQA.

Belongs to the MinE family.

In terms of biological role, prevents the cell division inhibition by proteins MinC and MinD at internal division sites while permitting inhibition at polar sites. This ensures cell division at the proper site by restricting the formation of a division septum at the midpoint of the long axis of the cell. This Paraburkholderia xenovorans (strain LB400) protein is Cell division topological specificity factor.